The chain runs to 369 residues: CCA-adding enzyme (369 aa).

Positions 8 and 11 each coordinate ATP. Residues G8 and R11 each coordinate CTP. Mg(2+)-binding residues include D21 and D23. Residues R91, R137, and R140 each contribute to the ATP site. Residues R91, R137, and R140 each contribute to the CTP site.

Belongs to the tRNA nucleotidyltransferase/poly(A) polymerase family. Bacterial CCA-adding enzyme type 2 subfamily. Mg(2+) serves as cofactor.

It catalyses the reaction a tRNA precursor + 2 CTP + ATP = a tRNA with a 3' CCA end + 3 diphosphate. It carries out the reaction a tRNA with a 3' CCA end + 2 CTP + ATP = a tRNA with a 3' CCACCA end + 3 diphosphate. In terms of biological role, catalyzes the addition and repair of the essential 3'-terminal CCA sequence in tRNAs without using a nucleic acid template. Adds these three nucleotides in the order of C, C, and A to the tRNA nucleotide-73, using CTP and ATP as substrates and producing inorganic pyrophosphate. tRNA 3'-terminal CCA addition is required both for tRNA processing and repair. Also involved in tRNA surveillance by mediating tandem CCA addition to generate a CCACCA at the 3' terminus of unstable tRNAs. While stable tRNAs receive only 3'-terminal CCA, unstable tRNAs are marked with CCACCA and rapidly degraded. This chain is CCA-adding enzyme, found in Francisella tularensis subsp. novicida (strain U112).